We begin with the raw amino-acid sequence, 159 residues long: 2-C-methyl-D-erythritol 2,4-cyclodiphosphate synthase (159 aa).

Residues Asp-10 and His-12 each coordinate a divalent metal cation. Residues 10–12 (DVH) and 36–37 (HS) contribute to the 4-CDP-2-C-methyl-D-erythritol 2-phosphate site. His-44 provides a ligand contact to a divalent metal cation. 4-CDP-2-C-methyl-D-erythritol 2-phosphate contacts are provided by residues 58–60 (DIG), 63–67 (FPDTD), 102–108 (AQVPKMA), 134–137 (TTTE), Phe-141, and Arg-144.

Belongs to the IspF family. Homotrimer. It depends on a divalent metal cation as a cofactor.

The catalysed reaction is 4-CDP-2-C-methyl-D-erythritol 2-phosphate = 2-C-methyl-D-erythritol 2,4-cyclic diphosphate + CMP. The protein operates within isoprenoid biosynthesis; isopentenyl diphosphate biosynthesis via DXP pathway; isopentenyl diphosphate from 1-deoxy-D-xylulose 5-phosphate: step 4/6. Its function is as follows. Involved in the biosynthesis of isopentenyl diphosphate (IPP) and dimethylallyl diphosphate (DMAPP), two major building blocks of isoprenoid compounds. Catalyzes the conversion of 4-diphosphocytidyl-2-C-methyl-D-erythritol 2-phosphate (CDP-ME2P) to 2-C-methyl-D-erythritol 2,4-cyclodiphosphate (ME-CPP) with a corresponding release of cytidine 5-monophosphate (CMP). In Shewanella woodyi (strain ATCC 51908 / MS32), this protein is 2-C-methyl-D-erythritol 2,4-cyclodiphosphate synthase.